We begin with the raw amino-acid sequence, 541 residues long: 2-hydroxyacylsphingosine 1-beta-galactosyltransferase (541 aa).

A signal peptide spans 1-20; the sequence is MKSYTPYFMLLWSAVGIARA. N78, N333, and N442 each carry an N-linked (GlcNAc...) asparagine glycan. A helical membrane pass occupies residues 472 to 492; it reads YFLLDIAFVLLLGAVLLYFIL. A disordered region spans residues 518–541; it reads HYQNGIRNGKYKGNGRVKHEKKVR. Over residues 526-541 the composition is skewed to basic residues; it reads GKYKGNGRVKHEKKVR.

This sequence belongs to the UDP-glycosyltransferase family.

It is found in the membrane. It localises to the endoplasmic reticulum. It catalyses the reaction an N-acylsphing-4-enine + UDP-alpha-D-galactose = a beta-D-galactosyl-(1&lt;-&gt;1')-N-acylsphing-4-enine + UDP + H(+). It carries out the reaction N-(2-hydroxy-hexanoyl)-sphing-4-enine + UDP-alpha-D-galactose = N-(2-hydroxy-hexanoyl)-beta-D-galactosyl-sphing-4-enine + UDP + H(+). The catalysed reaction is N-(2-hydroxy-hexanoyl)-sphinganine + UDP-alpha-D-galactose = N-(2-hydroxyhexanoyl)-beta-D-galactosylsphinganine + UDP + H(+). The enzyme catalyses an N-acyl-sphingoid base + UDP-alpha-D-galactose = a D-galactosylceramide + UDP + H(+). Its pathway is sphingolipid metabolism; galactosylceramide biosynthesis. Catalyzes the transfer of galactose to ceramide, a key enzymatic step in the biosynthesis of galactocerebrosides, which are abundant sphingolipids of the myelin membrane of the central nervous system and peripheral nervous system. Galactosylates both hydroxy- and non-hydroxy fatty acid-containing ceramides and diglycerides. This Mus musculus (Mouse) protein is 2-hydroxyacylsphingosine 1-beta-galactosyltransferase.